Consider the following 379-residue polypeptide: Cytochrome b (379 aa).

Transmembrane regions (helical) follow at residues 33–53 (FGSL…FLAM), 77–98 (WLIR…FIHV), 113–133 (WNIG…GYVL), and 178–198 (FFAF…VHLL). Residues histidine 83 and histidine 97 each coordinate heme b. Residues histidine 182 and histidine 196 each contribute to the heme b site. Histidine 201 contacts a ubiquinone. 4 consecutive transmembrane segments (helical) span residues 226-246 (TKDL…ALFF), 288-308 (LGGV…PLLN), 320-340 (VTQI…WIGG), and 347-367 (FTTI…ILIP).

It belongs to the cytochrome b family. As to quaternary structure, the cytochrome bc1 complex contains 11 subunits: 3 respiratory subunits (MT-CYB, CYC1 and UQCRFS1), 2 core proteins (UQCRC1 and UQCRC2) and 6 low-molecular weight proteins (UQCRH/QCR6, UQCRB/QCR7, UQCRQ/QCR8, UQCR10/QCR9, UQCR11/QCR10 and a cleavage product of UQCRFS1). This cytochrome bc1 complex then forms a dimer. It depends on heme b as a cofactor.

It is found in the mitochondrion inner membrane. Component of the ubiquinol-cytochrome c reductase complex (complex III or cytochrome b-c1 complex) that is part of the mitochondrial respiratory chain. The b-c1 complex mediates electron transfer from ubiquinol to cytochrome c. Contributes to the generation of a proton gradient across the mitochondrial membrane that is then used for ATP synthesis. The protein is Cytochrome b (MT-CYB) of Akodon reigi (Reig's grass mouse).